A 326-amino-acid polypeptide reads, in one-letter code: Eukaryotic translation initiation factor 3 subunit I (326 aa).

5 WD repeats span residues 8–47, 50–89, 145–184, 188–227, and 285–326; these read GHERSITQIKYNREGDLLFSCSKDQKPNVWYSLNGERLGT, GHQGAVWCLDVDWESRKLITGAGDMTTKIWDVEYGTVIAS, MTESKITSMLWGPLDETIITGHDNGNIAIWDIRKGQKVVD, DHSAGINDMQLSKDGTMFVTASKDTTAKLFDSESLMCLKT, and GHFG…NIFE.

The protein belongs to the eIF-3 subunit I family. Component of the eukaryotic translation initiation factor 3 (eIF-3) complex. The eIF-3 complex interacts with pix.

Its subcellular location is the cytoplasm. In terms of biological role, component of the eukaryotic translation initiation factor 3 (eIF-3) complex, which is involved in protein synthesis of a specialized repertoire of mRNAs and, together with other initiation factors, stimulates binding of mRNA and methionyl-tRNAi to the 40S ribosome. The eIF-3 complex specifically targets and initiates translation of a subset of mRNAs involved in cell proliferation. In Drosophila erecta (Fruit fly), this protein is Eukaryotic translation initiation factor 3 subunit I.